A 199-amino-acid polypeptide reads, in one-letter code: UPF0462 protein C4orf33 (199 aa).

The protein belongs to the UPF0462 family.

This Homo sapiens (Human) protein is UPF0462 protein C4orf33 (C4orf33).